The primary structure comprises 201 residues: Protease (201 aa).

Catalysis depends on residues His53, Asp70, and Cys121.

The protein belongs to the peptidase C5 family. Interacts with protease cofactor pVI-C; this interaction is necessary for protease activation.

The protein localises to the virion. Its subcellular location is the host nucleus. It catalyses the reaction Cleaves proteins of the adenovirus and its host cell at two consensus sites: -Yaa-Xaa-Gly-Gly-|-Xaa- and -Yaa-Xaa-Gly-Xaa-|-Gly- (in which Yaa is Met, Ile or Leu, and Xaa is any amino acid).. With respect to regulation, requires DNA and protease cofactor for maximal activation. Inside nascent virions, becomes partially activated by binding to the viral DNA, allowing it to cleave the cofactor that binds to the protease and fully activates it. Actin, like the viral protease cofactor, seems to act as a cofactor in the cleavage of cytokeratin 18 and of actin itself. Functionally, cleaves viral precursor proteins (pTP, pIIIa, pVI, pVII, pVIII, and pX) inside newly assembled particles giving rise to mature virions. Protease complexed to its cofactor slides along the viral DNA to specifically locate and cleave the viral precursors. Mature virions have a weakened organization compared to the unmature virions, thereby facilitating subsequent uncoating. Without maturation, the particle lacks infectivity and is unable to uncoat. Late in adenovirus infection, in the cytoplasm, may participate in the cytoskeleton destruction. Cleaves host cell cytoskeletal keratins K7 and K18. This chain is Protease, found in Equine adenovirus B serotype 2 (EAdV-2).